The primary structure comprises 422 residues: UDP-N-acetylglucosamine 1-carboxyvinyltransferase (422 aa).

22–23 (KN) contacts phosphoenolpyruvate. Arg93 provides a ligand contact to UDP-N-acetyl-alpha-D-glucosamine. Cys117 (proton donor) is an active-site residue. Cys117 carries the post-translational modification 2-(S-cysteinyl)pyruvic acid O-phosphothioketal. UDP-N-acetyl-alpha-D-glucosamine contacts are provided by residues 122-126 (RPVDL), Asp308, and Leu330.

It belongs to the EPSP synthase family. MurA subfamily.

The protein resides in the cytoplasm. It catalyses the reaction phosphoenolpyruvate + UDP-N-acetyl-alpha-D-glucosamine = UDP-N-acetyl-3-O-(1-carboxyvinyl)-alpha-D-glucosamine + phosphate. It functions in the pathway cell wall biogenesis; peptidoglycan biosynthesis. Functionally, cell wall formation. Adds enolpyruvyl to UDP-N-acetylglucosamine. The polypeptide is UDP-N-acetylglucosamine 1-carboxyvinyltransferase (Helicobacter acinonychis (strain Sheeba)).